The primary structure comprises 595 residues: ATPase family AAA domain-containing protein 3 (595 aa).

Positions 1 to 48 (MSWLFGVQKNATPQIPDDFQAGAAPGGPQQPGQGQRQEGNSKMAYSFD) are disordered. Residues 1–243 (MSWLFGVQKN…LNQFLNDKTK (243 aa)) lie on the Mitochondrial intermembrane side of the membrane. Residues 20–35 (QAGAAPGGPQQPGQGQ) show a composition bias toward low complexity. Coiled-coil stretches lie at residues 80 to 107 (VTRQ…HIRV) and 140 to 175 (EELA…EHEL). A helical transmembrane segment spans residues 244 to 260 (IAAAVGGLTALAVGWYT). Over 261–595 (AKRGTGVTAR…GTTLKRETAV (335 aa)) the chain is Mitochondrial matrix. Residue 349-356 (GPPGTGKT) coordinates ATP. The PDZ-binding motif lies at 592–595 (ETAV).

This sequence belongs to the AAA ATPase family.

Its subcellular location is the mitochondrion inner membrane. The protein resides in the mitochondrion matrix. The protein localises to the mitochondrion nucleoid. Its function is as follows. Essential for mitochondrial network organization, mitochondrial metabolism and cell growth at organism and cellular level. Important during development for the up-regulation of mitochondrial activity during the transition to higher larval stages. Regulates mitochondrial iron homeostasis. May play an important role in mitochondrial protein synthesis. May also participate in mitochondrial DNA replication. May bind to mitochondrial DNA D-loops and contribute to nucleoid stability. Plays a role in regulating the production of reactive oxygen species in response to heat stress. This is ATPase family AAA domain-containing protein 3 from Caenorhabditis elegans.